The chain runs to 172 residues: CD164 sialomucin-like 2 protein (172 aa).

An N-terminal signal peptide occupies residues 1-29; that stretch reads MAAPGPRALRAALCGGCCCLLLCAQLVLA. Topologically, residues 30–137 are extracellular; sequence GKGARGFGRG…PEDHSPGFDG (108 aa). Asn-69 and Asn-101 each carry an N-linked (GlcNAc...) asparagine glycan. The tract at residues 108–132 is disordered; it reads ASHHHSTEEPKPSTTGSPPIPEDHS. The chain crosses the membrane as a helical span at residues 138–158; sequence ASFIGGIVLVLSLQATAFFVL. At 159–172 the chain is on the cytoplasmic side; that stretch reads RFLKAKDSTYQTLI.

The protein belongs to the CD164 family.

It is found in the membrane. The sequence is that of CD164 sialomucin-like 2 protein (Cd164l2) from Mus musculus (Mouse).